The sequence spans 312 residues: Methionyl-tRNA formyltransferase (312 aa).

109-112 (SLLP) contacts (6S)-5,6,7,8-tetrahydrofolate.

It belongs to the Fmt family.

It catalyses the reaction L-methionyl-tRNA(fMet) + (6R)-10-formyltetrahydrofolate = N-formyl-L-methionyl-tRNA(fMet) + (6S)-5,6,7,8-tetrahydrofolate + H(+). Functionally, attaches a formyl group to the free amino group of methionyl-tRNA(fMet). The formyl group appears to play a dual role in the initiator identity of N-formylmethionyl-tRNA by promoting its recognition by IF2 and preventing the misappropriation of this tRNA by the elongation apparatus. This chain is Methionyl-tRNA formyltransferase, found in Listeria monocytogenes serotype 4a (strain HCC23).